The chain runs to 215 residues: Vesicle-trafficking protein SEC22b-B (215 aa).

Residues 1 to 190 (MVLLTMIARL…RSDAKYLNTR (190 aa)) are Cytoplasmic-facing. One can recognise a Longin domain in the interval 6 to 119 (MIARLADGLP…YSFIEFDTYI (114 aa)). The v-SNARE coiled-coil homology domain maps to 134-194 (NLSNINTELQ…KYLNTRSTYA (61 aa)). The chain crosses the membrane as a helical span at residues 191-213 (STYAKLAAGGVFFIMLIVYIRFW). The Lumenal segment spans residues 214–215 (WL).

Belongs to the synaptobrevin family. Component of 2 distinct SNARE complexes.

Its subcellular location is the endoplasmic reticulum membrane. It localises to the endoplasmic reticulum-Golgi intermediate compartment membrane. The protein localises to the golgi apparatus. The protein resides in the cis-Golgi network membrane. It is found in the trans-Golgi network membrane. Its subcellular location is the melanosome. Its function is as follows. SNARE involved in targeting and fusion of ER-derived transport vesicles with the Golgi complex as well as Golgi-derived retrograde transport vesicles with the ER. The sequence is that of Vesicle-trafficking protein SEC22b-B from Danio rerio (Zebrafish).